We begin with the raw amino-acid sequence, 234 residues long: Purine nucleoside phosphorylase DeoD-type (234 aa).

Histidine 5 provides a ligand contact to a purine D-ribonucleoside. Residues glycine 21, arginine 25, arginine 44, and 88-91 (RIGT) each bind phosphate. Residues 180–182 (DME) and 204–205 (SD) each bind a purine D-ribonucleoside. The Proton donor role is filled by aspartate 205.

It belongs to the PNP/UDP phosphorylase family. As to quaternary structure, homohexamer; trimer of homodimers.

The catalysed reaction is a purine D-ribonucleoside + phosphate = a purine nucleobase + alpha-D-ribose 1-phosphate. The enzyme catalyses a purine 2'-deoxy-D-ribonucleoside + phosphate = a purine nucleobase + 2-deoxy-alpha-D-ribose 1-phosphate. Catalyzes the reversible phosphorolytic breakdown of the N-glycosidic bond in the beta-(deoxy)ribonucleoside molecules, with the formation of the corresponding free purine bases and pentose-1-phosphate. The sequence is that of Purine nucleoside phosphorylase DeoD-type from Buchnera aphidicola subsp. Acyrthosiphon pisum (strain APS) (Acyrthosiphon pisum symbiotic bacterium).